The following is a 287-amino-acid chain: Orotidine 5'-phosphate decarboxylase (287 aa).

The active-site Proton donor is the lysine 99.

It belongs to the OMP decarboxylase family. Type 2 subfamily.

It catalyses the reaction orotidine 5'-phosphate + H(+) = UMP + CO2. The protein operates within pyrimidine metabolism; UMP biosynthesis via de novo pathway; UMP from orotate: step 2/2. In Clostridium novyi (strain NT), this protein is Orotidine 5'-phosphate decarboxylase.